The sequence spans 573 residues: DNA ligase (573 aa).

Residue Glu250 participates in ATP binding. Lys252 acts as the N6-AMP-lysine intermediate in catalysis. Positions 257, 272, 301, 342, 432, and 438 each coordinate ATP.

It belongs to the ATP-dependent DNA ligase family. Mg(2+) is required as a cofactor.

It carries out the reaction ATP + (deoxyribonucleotide)n-3'-hydroxyl + 5'-phospho-(deoxyribonucleotide)m = (deoxyribonucleotide)n+m + AMP + diphosphate.. In terms of biological role, DNA ligase that seals nicks in double-stranded DNA during DNA replication, DNA recombination and DNA repair. This is DNA ligase from Methanococcus maripaludis (strain C6 / ATCC BAA-1332).